We begin with the raw amino-acid sequence, 165 residues long: Large ribosomal subunit protein uL5 (165 aa).

It belongs to the universal ribosomal protein uL5 family. In terms of assembly, part of the 50S ribosomal subunit; contacts the 5S rRNA and probably tRNA. Forms a bridge to the 30S subunit in the 70S ribosome.

In terms of biological role, this is one of the proteins that bind and probably mediate the attachment of the 5S RNA into the large ribosomal subunit, where it forms part of the central protuberance. In the 70S ribosome it contacts protein S13 of the 30S subunit (bridge B1b), connecting the 2 subunits; this bridge is implicated in subunit movement. May contact the P site tRNA; the 5S rRNA and some of its associated proteins might help stabilize positioning of ribosome-bound tRNAs. In Methanoregula boonei (strain DSM 21154 / JCM 14090 / 6A8), this protein is Large ribosomal subunit protein uL5.